Consider the following 80-residue polypeptide: U19-lycotoxin-Ls1b (80 aa).

An N-terminal signal peptide occupies residues 1-22; the sequence is MSPKVQALIFIVGLITLLAAHA. A propeptide spanning residues 23-34 is cleaved from the precursor; the sequence is QEELSDNIESER. Cystine bridges form between Cys-36-Cys-50, Cys-43-Cys-55, Cys-49-Cys-66, and Cys-57-Cys-64.

It belongs to the neurotoxin 02 (plectoxin) family. 05 (U19-lycotoxin) subfamily. Expressed by the venom gland.

The protein resides in the secreted. This chain is U19-lycotoxin-Ls1b, found in Lycosa singoriensis (Wolf spider).